A 117-amino-acid chain; its full sequence is UPF0344 protein GWCH70_0687 (117 aa).

Helical transmembrane passes span 2–22 (THAH…AVSL), 32–52 (IVQM…GLLL), 55–75 (IASI…LIGA), and 97–117 (IVAF…FDLF).

The protein belongs to the UPF0344 family.

The protein localises to the cell membrane. This is UPF0344 protein GWCH70_0687 from Geobacillus sp. (strain WCH70).